Reading from the N-terminus, the 522-residue chain is F-box-like/WD repeat-containing protein TBL1Y (522 aa).

Position 2 is an N-acetylserine (serine 2). Positions 4-36 (TSDEVNFLVYRYLQESGFSHSAFTFGIESHISQ) constitute a LisH domain. The 46-residue stretch at 41 to 86 (GTLVPPSALISILQKGLQYVEAEISINKDGTVFDSRPIESLSLIVA) folds into the F-box-like domain. N6-acetyllysine is present on lysine 102. Phosphoserine is present on serine 130. WD repeat units follow at residues 177–216 (GHES…NGGS), 233–272 (PSNK…ASTL), 274–313 (QHKG…AKQQ), 316–354 (FHSA…PVKT), 357–396 (GHTN…CVHD), 399–447 (AHSK…CTHT), 450–489 (KHQE…LVHS), and 491–521 (QGTG…CVLD). Lysine 287 is covalently cross-linked (Glycyl lysine isopeptide (Lys-Gly) (interchain with G-Cter in SUMO2)).

Belongs to the WD repeat EBI family. In terms of assembly, probable component of the N-Cor repressor complex and some E3 ubiquitin ligase complex. Interacts with NCOR2. As to expression, fetal brain and prostate. Expressed in the cochlear spiral ganglion neurons, and in outer and inner hair cells.

It is found in the nucleus. Functionally, F-box-like protein involved in the recruitment of the ubiquitin/19S proteasome complex to nuclear receptor-regulated transcription units. Plays an essential role in transcription activation mediated by nuclear receptors. Probably acts as integral component of corepressor complexes that mediates the recruitment of the 19S proteasome complex, leading to the subsequent proteasomal degradation of transcription repressor complexes, thereby allowing cofactor exchange. The chain is F-box-like/WD repeat-containing protein TBL1Y (TBL1Y) from Homo sapiens (Human).